The sequence spans 77 residues: DNA-directed RNA polymerase subunit omega (77 aa).

The protein belongs to the RNA polymerase subunit omega family. In terms of assembly, the RNAP catalytic core consists of 2 alpha, 1 beta, 1 beta' and 1 omega subunit. When a sigma factor is associated with the core the holoenzyme is formed, which can initiate transcription.

The catalysed reaction is RNA(n) + a ribonucleoside 5'-triphosphate = RNA(n+1) + diphosphate. Functionally, promotes RNA polymerase assembly. Latches the N- and C-terminal regions of the beta' subunit thereby facilitating its interaction with the beta and alpha subunits. The sequence is that of DNA-directed RNA polymerase subunit omega from Nitratidesulfovibrio vulgaris (strain ATCC 29579 / DSM 644 / CCUG 34227 / NCIMB 8303 / VKM B-1760 / Hildenborough) (Desulfovibrio vulgaris).